The primary structure comprises 87 residues: MEVIADRLDDIVKQNIADEKFVDFVIHGLEHQCPAILRPLIRLFIDILLFVIVIYIFTVRLVSRNYQMLLALVALVITLTIFYYFIL.

Transmembrane regions (helical) follow at residues 39–59 (PLIRLFIDILLFVIVIYIFTV) and 67–87 (QMLLALVALVITLTIFYYFIL).

This sequence belongs to the orthopoxvirus OPG096 family. As to quaternary structure, interacts with OPG158.

It localises to the virion membrane. The protein localises to the host cytoplasm. It is found in the host endoplasmic reticulum membrane. Functionally, early protein involved in virion morphogenesis. Participates in the formation and elongation of crescent-shaped membrane precursors of immature virions in cytoplasmic factories. The sequence is that of Protein OPG096 (OPG096) from Vaccinia virus (strain Copenhagen) (VACV).